The following is a 250-amino-acid chain: Small ribosomal subunit protein uS3 (250 aa).

The KH type-2 domain maps to 39-111 (IRPLIKNHYP…KVQINIFEVK (73 aa)).

Belongs to the universal ribosomal protein uS3 family. Part of the 30S ribosomal subunit. Forms a tight complex with proteins S10 and S14.

Its function is as follows. Binds the lower part of the 30S subunit head. Binds mRNA in the 70S ribosome, positioning it for translation. This is Small ribosomal subunit protein uS3 from Ziziphus jujuba witches'-broom phytoplasma.